The primary structure comprises 232 residues: Phosphoribosylaminoimidazole-succinocarboxamide synthase (232 aa).

The protein belongs to the SAICAR synthetase family.

The catalysed reaction is 5-amino-1-(5-phospho-D-ribosyl)imidazole-4-carboxylate + L-aspartate + ATP = (2S)-2-[5-amino-1-(5-phospho-beta-D-ribosyl)imidazole-4-carboxamido]succinate + ADP + phosphate + 2 H(+). The protein operates within purine metabolism; IMP biosynthesis via de novo pathway; 5-amino-1-(5-phospho-D-ribosyl)imidazole-4-carboxamide from 5-amino-1-(5-phospho-D-ribosyl)imidazole-4-carboxylate: step 1/2. In Finegoldia magna (strain ATCC 29328 / DSM 20472 / WAL 2508) (Peptostreptococcus magnus), this protein is Phosphoribosylaminoimidazole-succinocarboxamide synthase.